We begin with the raw amino-acid sequence, 932 residues long: Protocadherin gamma-A7 (932 aa).

The signal sequence occupies residues 1–28; that stretch reads MAAQPRGGDYRGFFLLSILLGTPWEAWA. Cadherin domains follow at residues 29–133, 134–242, 243–347, 348–452, 453–562, and 570–682; these read GRIL…VPRF, LTEE…TPVF, SLPQ…APEV, TMTS…PPTF, PHSS…PPEI, and DGST…EPSD. Over 29-692 the chain is Extracellular; it reads GRILYSVSEE…GPYNYDLTLY (664 aa). Residues N419 and N545 are each glycosylated (N-linked (GlcNAc...) asparagine). The helical transmembrane segment at 693 to 713 threads the bilayer; it reads LVVAVATVSCVFLAFVLVLLA. At 714–932 the chain is on the cytoplasmic side; that stretch reads LRLRRWHKSR…KKKSGKKEKK (219 aa). 2 disordered regions span residues 805 to 841 and 902 to 932; these read PSIQ…WPNN and ATLT…KEKK. Basic residues predominate over residues 922–932; the sequence is NKKKSGKKEKK.

The protein resides in the cell membrane. Functionally, potential calcium-dependent cell-adhesion protein. May be involved in the establishment and maintenance of specific neuronal connections in the brain. This chain is Protocadherin gamma-A7 (PCDHGA7), found in Homo sapiens (Human).